Consider the following 280-residue polypeptide: Fructose-1,6-bisphosphatase class 1 (280 aa).

Mg(2+) contacts are provided by Glu-64, Asp-83, Leu-85, and Asp-86. Residues Asp-86–Ser-89, Tyr-189, and Lys-220 each bind substrate. Position 226 (Glu-226) interacts with Mg(2+).

It belongs to the FBPase class 1 family. Homotetramer. It depends on Mg(2+) as a cofactor.

The protein localises to the cytoplasm. It carries out the reaction beta-D-fructose 1,6-bisphosphate + H2O = beta-D-fructose 6-phosphate + phosphate. It functions in the pathway carbohydrate biosynthesis; gluconeogenesis. This is Fructose-1,6-bisphosphatase class 1 from Campylobacter jejuni subsp. jejuni serotype O:23/36 (strain 81-176).